A 256-amino-acid polypeptide reads, in one-letter code: Indole-3-glycerol phosphate synthase (256 aa).

Belongs to the TrpC family.

It catalyses the reaction 1-(2-carboxyphenylamino)-1-deoxy-D-ribulose 5-phosphate + H(+) = (1S,2R)-1-C-(indol-3-yl)glycerol 3-phosphate + CO2 + H2O. It participates in amino-acid biosynthesis; L-tryptophan biosynthesis; L-tryptophan from chorismate: step 4/5. The polypeptide is Indole-3-glycerol phosphate synthase (Pelodictyon phaeoclathratiforme (strain DSM 5477 / BU-1)).